A 247-amino-acid polypeptide reads, in one-letter code: Carboxy-S-adenosyl-L-methionine synthase (247 aa).

S-adenosyl-L-methionine contacts are provided by residues tyrosine 39, 64-66, 89-90, 117-118, asparagine 132, and arginine 199; these read GCS, DN, and DI.

Belongs to the class I-like SAM-binding methyltransferase superfamily. Cx-SAM synthase family. In terms of assembly, homodimer.

It catalyses the reaction prephenate + S-adenosyl-L-methionine = carboxy-S-adenosyl-L-methionine + 3-phenylpyruvate + H2O. Catalyzes the conversion of S-adenosyl-L-methionine (SAM) to carboxy-S-adenosyl-L-methionine (Cx-SAM). The chain is Carboxy-S-adenosyl-L-methionine synthase from Salmonella agona (strain SL483).